The primary structure comprises 441 residues: Probable D-serine dehydratase (441 aa).

Residue Lys-101 is modified to N6-(pyridoxal phosphate)lysine.

This sequence belongs to the serine/threonine dehydratase family. DsdA subfamily. It depends on pyridoxal 5'-phosphate as a cofactor.

It carries out the reaction D-serine = pyruvate + NH4(+). In Geobacillus kaustophilus (strain HTA426), this protein is Probable D-serine dehydratase.